A 199-amino-acid chain; its full sequence is Tumor necrosis factor ligand superfamily member 4 (199 aa).

Topologically, residues 1–25 (MEGEGVQPPDENLENGSRPRFKWKK) are cytoplasmic. A helical; Signal-anchor for type II membrane protein membrane pass occupies residues 26–48 (VLRLVVSGIKAAGLLLCVVYVCL). The Extracellular portion of the chain corresponds to 49–199 (QFSSSPAKDS…YSSTVNQVPL (151 aa)). A THD domain is found at 59-176 (PIQRLRAPVT…QINDGELIIV (118 aa)). Disulfide bonds link cysteine 70–cysteine 163 and cysteine 98–cysteine 184. N-linked (GlcNAc...) asparagine glycosylation is found at asparagine 91 and asparagine 157.

It belongs to the tumor necrosis factor family. In terms of assembly, homotrimer. As to expression, detected in T-cell lines, but not in a macrophage cell line.

Its subcellular location is the membrane. Its function is as follows. Cytokine that binds to TNFRSF4. Co-stimulates T-cell proliferation and cytokine production. The chain is Tumor necrosis factor ligand superfamily member 4 (Tnfsf4) from Rattus norvegicus (Rat).